A 502-amino-acid polypeptide reads, in one-letter code: MEEFQVYLELNRSRRHDFLYPLIFREYIYALAHDHGLNKSMIFLENQGYGNKFSSLIVKRLIIRMDQQNHLIISANDXNQNPFFGHNNNLYSQMISAGFAVIVEIPFSLRLVSYSQGEEVAKSHNLQSIHSIFPFLEDKFSHLNYVLDVLIPHPIHLEILVQALRYWVKDASSLHLLRFSLYEYCNLKSFITPKKSISIFNPRLFLFLYNSHVCEYESIFLFLRNQSSHLRSTSSGVFLERIYFYGKIEYLVEVFYNDFQNNLWLFKDPFIHFIRYQGKAILASKDTSLLMNKWKYYFVDLWQYYFYMWSQSGRVRINQLSKYSLDFLGYLSSVRLNPSVVRSQMLENSFIIDNAMKKLDTRIPIISLIGSLSKAKFCNTLGHPISKPTWADSSDSDIIDRFVRICRNLSHYHSGSSKKKSLYRIKYILRLSCVKTLARKHKSTVRAFLKRLGSEFLEEFFTEEEHVFSLIFPKVFFTSRKLYRGRIWYLDIICINALVNHE.

The protein belongs to the intron maturase 2 family. MatK subfamily.

The protein localises to the plastid. It is found in the chloroplast. Its function is as follows. Usually encoded in the trnK tRNA gene intron. Probably assists in splicing its own and other chloroplast group II introns. The protein is Maturase K of Tilia americana (American basswood).